The primary structure comprises 122 residues: Large ribosomal subunit protein uL14 (122 aa).

This sequence belongs to the universal ribosomal protein uL14 family. In terms of assembly, part of the 50S ribosomal subunit. Forms a cluster with proteins L3 and L19. In the 70S ribosome, L14 and L19 interact and together make contacts with the 16S rRNA in bridges B5 and B8.

In terms of biological role, binds to 23S rRNA. Forms part of two intersubunit bridges in the 70S ribosome. The protein is Large ribosomal subunit protein uL14 of Levilactobacillus brevis (strain ATCC 367 / BCRC 12310 / CIP 105137 / JCM 1170 / LMG 11437 / NCIMB 947 / NCTC 947) (Lactobacillus brevis).